We begin with the raw amino-acid sequence, 477 residues long: Cysteine--tRNA ligase (477 aa).

Cysteine 29 lines the Zn(2+) pocket. The 'HIGH' region signature appears at 31-41 (PTVYDYPHLGH). Zn(2+) contacts are provided by cysteine 209, histidine 234, and glutamate 238. A 'KMSKS' region motif is present at residues 266–270 (KMSKS). Position 269 (lysine 269) interacts with ATP.

The protein belongs to the class-I aminoacyl-tRNA synthetase family. The cofactor is Zn(2+).

It localises to the cytoplasm. It catalyses the reaction tRNA(Cys) + L-cysteine + ATP = L-cysteinyl-tRNA(Cys) + AMP + diphosphate. In Pyrococcus abyssi (strain GE5 / Orsay), this protein is Cysteine--tRNA ligase (cysS).